Consider the following 103-residue polypeptide: PTS system lactose-specific EIIA component (103 aa).

One can recognise a PTS EIIA type-3 domain in the interval Met1–Arg102. His78 serves as the catalytic Tele-phosphohistidine intermediate. Position 78 is a phosphohistidine; by HPr (His78). Residue Asp81 participates in Mg(2+) binding.

Homotrimer. The cofactor is Mg(2+).

Its subcellular location is the cytoplasm. The phosphoenolpyruvate-dependent sugar phosphotransferase system (sugar PTS), a major carbohydrate active transport system, catalyzes the phosphorylation of incoming sugar substrates concomitantly with their translocation across the cell membrane. The enzyme II LacEF PTS system is involved in lactose transport. In Staphylococcus aureus (strain COL), this protein is PTS system lactose-specific EIIA component.